Consider the following 526-residue polypeptide: Probable fucosyltransferase 7 (526 aa).

Topologically, residues 1–4 (MKTK) are cytoplasmic. The helical; Signal-anchor for type II membrane protein transmembrane segment at 5-25 (LMITIFSCLLLWSMLLLLSFS) threads the bilayer. Over 26 to 526 (NIFKHQLLGA…KLVDDTKNEL (501 aa)) the chain is Lumenal. Asn211, Asn215, and Asn363 each carry an N-linked (GlcNAc...) asparagine glycan.

It belongs to the glycosyltransferase 37 family. In terms of tissue distribution, expressed in roots, leaves, stems and seedlings.

It is found in the golgi apparatus. The protein localises to the golgi stack membrane. The protein operates within protein modification; protein glycosylation. Its function is as follows. May be involved in cell wall biosynthesis. May act as a fucosyltransferase. The polypeptide is Probable fucosyltransferase 7 (FUT7) (Arabidopsis thaliana (Mouse-ear cress)).